The following is a 554-amino-acid chain: MASSQVGDMVNGNAEPTRHLAKFPPSLWGDRFTSFTLDKQLWDKYGNEIEVLKEQVRSMVVAGGRKAAEQINLINVLQRLGVSYHFEKEIEEQLEQLFAKFEDNEDYDLFTIALHFRIFRQHGYKMSCDVFNKFRDSNGEFKETMSNDVQGMLSLYEATYLKIRGEGFLDEAHAFTIAQLESLVEGPHLSSDLSEQVMHALKQSIHRGFPRLEAKHFISFYEKDASRNETLLRLAKLDFNQLQLSHREELCHIFRWWKELDLISKVPYARDRAVECFFWSTCAYYEPQHSVGRAVLTKIMLLLSVTDDTYDAYGTYNELKIYTNAVQRWDVSAMDELPDYMKALYRALLNVYDEVERDLAKQGRAYGVHHSKEAFKEIVRSYEIEAEWFKEGYVASFEEYMKNALVTSTGRLHTTSCFMGLEADVATTEAFEWILTKPKMVAASGAIGRLVDDVMSHDEEQERGHVATGLDCYMKQHGVSKQEAIVELYKMIENAWRDINEEMLKPTAISMKLLIRVLNLSRISDVVYKYVDGYTHPEIIKDHVISLFEDPIPM.

Positions 307 and 311 each coordinate Mg(2+). The short motif at 326 to 330 is the DDXXD motif element; that stretch reads VQRWD. Mg(2+) contacts are provided by D452, S456, and E460.

It belongs to the terpene synthase family. It depends on Mg(2+) as a cofactor.

It catalyses the reaction (2E,6E)-farnesyl diphosphate + H2O = valerianol + diphosphate. The protein operates within secondary metabolite biosynthesis; terpenoid biosynthesis. Functionally, terpene synthase that catalyzes the biosynthesis of the terpene valerianol, which is a volatile compound of floral scent. The sequence is that of Valerianol synthase TPS1B from Camellia hiemalis (Camellia).